A 435-amino-acid chain; its full sequence is GTPase Der (435 aa).

EngA-type G domains lie at 3 to 168 (PTVA…PEDD) and 176 to 351 (VKLT…QNRR). Residues 9–16 (GRPNVGKS), 56–60 (DTGGY), 120–123 (NKVD), 182–189 (GRPNVGKS), 229–233 (DTAGL), and 294–297 (NKWD) contribute to the GTP site. Residues 352–435 (MKIDTSRLNN…TPIELKFRRK (84 aa)) form the KH-like domain.

This sequence belongs to the TRAFAC class TrmE-Era-EngA-EngB-Septin-like GTPase superfamily. EngA (Der) GTPase family. In terms of assembly, associates with the 50S ribosomal subunit.

GTPase that plays an essential role in the late steps of ribosome biogenesis. This Chloroherpeton thalassium (strain ATCC 35110 / GB-78) protein is GTPase Der.